The primary structure comprises 757 residues: RNA-directed RNA polymerase catalytic subunit (757 aa).

Residues Ser50–Gln79 form a disordered region. The segment covering Trp55–Pro64 has biased composition (polar residues). Short sequence motifs (nuclear localization signal) lie at residues Arg187–Met195 and Arg203–Ser216. The interval Arg249 to Glu256 is promoter-binding site. The region spanning Val286–Tyr483 is the RdRp catalytic domain.

This sequence belongs to the influenza viruses polymerase PB1 family. In terms of assembly, influenza RNA polymerase is composed of three subunits: PB1, PB2 and PA. Interacts (via N-terminus) with PA (via C-terminus). Interacts (via C-terminus) with PB2 (via N-terminus); this interaction is essential for transcription initiation. In terms of processing, phosphorylated by host PRKCA.

The protein resides in the host nucleus. The protein localises to the host cytoplasm. It catalyses the reaction RNA(n) + a ribonucleoside 5'-triphosphate = RNA(n+1) + diphosphate. RNA-dependent RNA polymerase which is responsible for replication and transcription of virus RNA segments. The transcription of viral mRNAs occurs by a unique mechanism called cap-snatching. 5' methylated caps of cellular mRNAs are cleaved after 10-13 nucleotides by PA. In turn, these short capped RNAs are used as primers by PB1 for transcription of viral mRNAs. During virus replication, PB1 initiates RNA synthesis and copy vRNA into complementary RNA (cRNA) which in turn serves as a template for the production of more vRNAs. This Influenza A virus (strain A/Dunedin/4/1973 H3N2) protein is RNA-directed RNA polymerase catalytic subunit.